A 212-amino-acid chain; its full sequence is Pyridoxine/pyridoxamine 5'-phosphate oxidase (212 aa).

Substrate is bound by residues 8–11 (RREY) and Lys-66. Residues 61-66 (RIVLLK), 76-77 (FT), Arg-82, Lys-83, and Gln-105 each bind FMN. Substrate-binding residues include Tyr-123, Arg-127, and Ser-131. Residues 140-141 (QS) and Trp-185 each bind FMN. 191-193 (RLH) contacts substrate. Arg-195 provides a ligand contact to FMN.

This sequence belongs to the pyridoxamine 5'-phosphate oxidase family. Homodimer. Requires FMN as cofactor.

The enzyme catalyses pyridoxamine 5'-phosphate + O2 + H2O = pyridoxal 5'-phosphate + H2O2 + NH4(+). The catalysed reaction is pyridoxine 5'-phosphate + O2 = pyridoxal 5'-phosphate + H2O2. The protein operates within cofactor metabolism; pyridoxal 5'-phosphate salvage; pyridoxal 5'-phosphate from pyridoxamine 5'-phosphate: step 1/1. It functions in the pathway cofactor metabolism; pyridoxal 5'-phosphate salvage; pyridoxal 5'-phosphate from pyridoxine 5'-phosphate: step 1/1. Catalyzes the oxidation of either pyridoxine 5'-phosphate (PNP) or pyridoxamine 5'-phosphate (PMP) into pyridoxal 5'-phosphate (PLP). The protein is Pyridoxine/pyridoxamine 5'-phosphate oxidase of Shewanella oneidensis (strain ATCC 700550 / JCM 31522 / CIP 106686 / LMG 19005 / NCIMB 14063 / MR-1).